A 298-amino-acid chain; its full sequence is Tyrosine recombinase XerD (298 aa).

A Core-binding (CB) domain is found at 3 to 88; that stretch reads ALDHPLIDQF…GLRGFFRYLL (86 aa). A Tyr recombinase domain is found at 109 to 292; sequence PLPKSLSEAD…AKARLQQLHA (184 aa). Active-site residues include Arg149, Lys173, His244, Arg247, and His270. The active-site O-(3'-phospho-DNA)-tyrosine intermediate is Tyr279.

The protein belongs to the 'phage' integrase family. XerD subfamily. As to quaternary structure, forms a cyclic heterotetrameric complex composed of two molecules of XerC and two molecules of XerD.

Its subcellular location is the cytoplasm. In terms of biological role, site-specific tyrosine recombinase, which acts by catalyzing the cutting and rejoining of the recombining DNA molecules. The XerC-XerD complex is essential to convert dimers of the bacterial chromosome into monomers to permit their segregation at cell division. It also contributes to the segregational stability of plasmids. The polypeptide is Tyrosine recombinase XerD (Pseudomonas putida (strain ATCC 47054 / DSM 6125 / CFBP 8728 / NCIMB 11950 / KT2440)).